A 477-amino-acid polypeptide reads, in one-letter code: NADH-quinone oxidoreductase subunit N (477 aa).

The next 13 helical transmembrane spans lie at 7–27 (VLAHALPELILAGGVLLLILI), 37–57 (GPMTELAVGLLGIAILTLVLG), 77–97 (FMKVLVLIGSLVSLIMGQTYL), 109–129 (ILILLSTLGMLMLISATGLIA), 162–182 (FVLGALSSGMLLYGASLIYGF), 201–221 (LGVVFGLVFLTAGLAFKMSTV), 233–253 (GAPTPVTAFFASAPKLAAIAI), 272–292 (IIVFISILSMALGSFAAIGQT), 297–317 (LMAYSSIGHMGFALVGLAAGT), 323–343 (GVLAYMAIYLVMTLGTFAAIL), 369–389 (AFFLAIMMFSLAGIPPLAGFF), 402–424 (HLYPLAVIGVLCSTVGAYYYLRI), and 446–466 (AVLIVTGLAVLLLCVYPGSFV).

The protein belongs to the complex I subunit 2 family. NDH-1 is composed of 14 different subunits. Subunits NuoA, H, J, K, L, M, N constitute the membrane sector of the complex.

It is found in the cell inner membrane. It carries out the reaction a quinone + NADH + 5 H(+)(in) = a quinol + NAD(+) + 4 H(+)(out). NDH-1 shuttles electrons from NADH, via FMN and iron-sulfur (Fe-S) centers, to quinones in the respiratory chain. The immediate electron acceptor for the enzyme in this species is believed to be ubiquinone. Couples the redox reaction to proton translocation (for every two electrons transferred, four hydrogen ions are translocated across the cytoplasmic membrane), and thus conserves the redox energy in a proton gradient. The protein is NADH-quinone oxidoreductase subunit N of Beijerinckia indica subsp. indica (strain ATCC 9039 / DSM 1715 / NCIMB 8712).